We begin with the raw amino-acid sequence, 204 residues long: Small ribosomal subunit protein uS4 (204 aa).

The region spanning 95 to 157 (RRLDNTVFRM…KGIHSIIRHN (63 aa)) is the S4 RNA-binding domain.

Belongs to the universal ribosomal protein uS4 family. In terms of assembly, part of the 30S ribosomal subunit. Contacts protein S5. The interaction surface between S4 and S5 is involved in control of translational fidelity.

In terms of biological role, one of the primary rRNA binding proteins, it binds directly to 16S rRNA where it nucleates assembly of the body of the 30S subunit. Its function is as follows. With S5 and S12 plays an important role in translational accuracy. This chain is Small ribosomal subunit protein uS4, found in Treponema pallidum (strain Nichols).